A 191-amino-acid polypeptide reads, in one-letter code: Rho-related GTP-binding protein RhoH (191 aa).

Gly11–Thr18 is a binding site for GTP. The Effector region motif lies at Tyr33–Thr41. Residue Asp58–Asn62 participates in GTP binding. Residues Tyr73–Ala86 form an interaction with ZAP70 region. Thr116–Asp119 is a binding site for GTP. Cysteine methyl ester is present on Cys188. Cys188 carries S-geranylgeranyl cysteine lipidation. Positions Lys189–Phe191 are cleaved as a propeptide — removed in mature form.

It belongs to the small GTPase superfamily. Rho family. Interacts with GDI1 and GDI2. Interacts with ZAP70 (via SH2 domains) and the interaction is enhanced by its phosphorylation by LCK. Interacts with SYK and the interaction is enhanced by its phosphorylation by FYN. In terms of processing, phosphorylated on tyrosine by LCK. Phosphorylated by FYN. Phosphorylation enhances the interactions with ZAP70 and SYK and is critical for its function in thymocyte development. In terms of tissue distribution, expression is widespread in hematopoietic cells, including in bone marrow progenitor cells and in differentiated myeloid as well as lymphoid cells. Expressed at high levels in the thymus and mast cells, found in spleen and low-density bone marrow (LDBM) cells and is detected at a low level in neutrophils. In the thymus it is detected in thymocytes of the thymic cortex but not in non-lymphoid cells of fibrovascular and fibroadipose tissues. Expressed in T-cells, B-cells and mast cells.

The protein resides in the cytoplasm. Its subcellular location is the cell membrane. In terms of biological role, binds GTP but lacks intrinsic GTPase activity and is resistant to Rho-specific GTPase-activating proteins. Inhibits the activation of NF-kappa-B by TNF and IKKB and the activation of CRK/p38 by TNF. Inhibits activities of RAC1, RHOA and CDC42. Negatively regulates leukotriene production in neutrophils. Negative regulator of hematopoietic progenitor cell proliferation, survival and migration. Critical regulator of thymocyte development and T-cell antigen receptor (TCR) signaling by mediating recruitment and activation of ZAP70. Required for phosphorylation of CD3Z, membrane translocation of ZAP70 and subsequent activation of the ZAP70-mediated pathways. Essential for efficient beta-selection and positive selection by promoting the ZAP70-dependent phosphorylation of the LAT signalosome during pre-TCR and TCR signaling. Crucial for thymocyte maturation during DN3 to DN4 transition and during positive selection. Plays critical roles in mast cell function by facilitating phosphorylation of SYK in Fc epsilon RI-mediated signal transduction. Essential for the phosphorylation of LAT, LCP2, PLCG1 and PLCG2 and for Ca(2+) mobilization in mast cells. The chain is Rho-related GTP-binding protein RhoH (Rhoh) from Mus musculus (Mouse).